The sequence spans 924 residues: Aminopeptidase 2 (924 aa).

The N-terminal stretch at 1 to 45 is a signal peptide; sequence MASNNTSQRSGFSSFFCRLKTYFCNHFLCLFVLSFFPLSFRRLCL. Residues 46–57 constitute a propeptide that is removed on maturation; sequence LCHLCEKSNLWL. At Ser-58 the chain carries N-acetylserine; partial. The N-linked (GlcNAc...) asparagine glycan is linked to Asn-92. Glu-194 contributes to the substrate binding site. Asn-229 carries an N-linked (GlcNAc...) asparagine glycan. Position 327-331 (327-331) interacts with substrate; it reads GAMEN. His-363 contributes to the Zn(2+) binding site. The Proton acceptor role is filled by Glu-364. His-367 and Glu-386 together coordinate Zn(2+).

Belongs to the peptidase M1 family. It depends on Zn(2+) as a cofactor.

The protein resides in the secreted. The protein localises to the cell wall. Inactivated by metal-chelating agents phenanthroline and EDTA. Inhibited by bestatin, an aminopeptidase inhibitor. Not inhibited by pepstatin A and PMSF, inhibitors of aspartic and the serine proteases, respectively. Not inhibited by carboxypeptidase inhibitor. In terms of biological role, metalloprotease that specifically hydrolyzes peptides with N-terminal alanine, arginine and leucine residues. This is Aminopeptidase 2 (APE2) from Candida albicans (strain SC5314 / ATCC MYA-2876) (Yeast).